The following is a 498-amino-acid chain: ATP synthase subunit beta, chloroplastic (498 aa).

Phosphothreonine is present on Thr-6. At Ser-13 the chain carries Phosphoserine. 172 to 179 is a binding site for ATP; sequence GGAGVGKT.

The protein belongs to the ATPase alpha/beta chains family. In terms of assembly, F-type ATPases have 2 components, CF(1) - the catalytic core - and CF(0) - the membrane proton channel. CF(1) has five subunits: alpha(3), beta(3), gamma(1), delta(1), epsilon(1). CF(0) has four main subunits: a(1), b(1), b'(1) and c(9-12).

Its subcellular location is the plastid. It localises to the chloroplast thylakoid membrane. The enzyme catalyses ATP + H2O + 4 H(+)(in) = ADP + phosphate + 5 H(+)(out). Produces ATP from ADP in the presence of a proton gradient across the membrane. The catalytic sites are hosted primarily by the beta subunits. This chain is ATP synthase subunit beta, chloroplastic, found in Barbarea verna (Land cress).